Reading from the N-terminus, the 290-residue chain is ATP synthase gamma chain (290 aa).

It belongs to the ATPase gamma chain family. As to quaternary structure, F-type ATPases have 2 components, CF(1) - the catalytic core - and CF(0) - the membrane proton channel. CF(1) has five subunits: alpha(3), beta(3), gamma(1), delta(1), epsilon(1). CF(0) has three main subunits: a, b and c.

Its subcellular location is the cell inner membrane. In terms of biological role, produces ATP from ADP in the presence of a proton gradient across the membrane. The gamma chain is believed to be important in regulating ATPase activity and the flow of protons through the CF(0) complex. This is ATP synthase gamma chain from Anaeromyxobacter sp. (strain K).